The following is a 392-amino-acid chain: Speckle-type POZ protein-like B (392 aa).

The region spanning 31 to 161 is the MATH domain; it reads KFSYMWTINN…DDKLTLFCEV (131 aa). A BTB domain is found at 200–267; sequence TDCSLFVGGQ…IYTGKAPNLE (68 aa).

Belongs to the Tdpoz family. Homodimer. Heterodimer with SPOP. Component of cullin-RING-based BCR (BTB-CUL3-RBX1) E3 ubiquitin-protein ligase complexes containing homodimeric SPOPL or the heterodimer formed by SPOP and SPOPL.

The protein localises to the nucleus. Its pathway is protein modification; protein ubiquitination. Its function is as follows. Component of a cullin-RING-based BCR (BTB-CUL3-RBX1) E3 ubiquitin-protein ligase complex that mediates the ubiquitination and subsequent proteasomal degradation of target proteins, but with relatively low efficiency. The chain is Speckle-type POZ protein-like B (spoplb) from Danio rerio (Zebrafish).